We begin with the raw amino-acid sequence, 440 residues long: Transposon Ty1-NL1 Gag polyprotein (440 aa).

4 stretches are compositionally biased toward polar residues: residues 1–23 (MESQQLSQHSPISHGSACASVTS), 48–60 (TKANSQQTTTPAS), 71–86 (SPQTAQSHSPQNGPYQ), and 131–152 (PQYPSSVGTPLSTPSPESGNTF). Disordered regions lie at residues 1–86 (MESQ…GPYQ), 131–171 (PQYP…YVRP), and 350–425 (QQES…TEPI). The span at 153-165 (TDSSSADSDMTST) shows a compositional bias: low complexity. The RNA-binding stretch occupies residues 299–401 (NNGIPINNKV…NSQSRTARAH (103 aa)). Over residues 363 to 372 (NPSDEKKDSR) the composition is skewed to basic and acidic residues. A compositionally biased stretch (polar residues) spans 373 to 412 (TYTNTTKPKSITRNSQKPNNSQSRTARAHNVSTSNNSSGP).

Homotrimer.

The protein resides in the cytoplasm. Its function is as follows. Capsid protein (CA) is the structural component of the virus-like particle (VLP), forming the shell that encapsulates the retrotransposons dimeric RNA genome. The particles are assembled from trimer-clustered units and there are holes in the capsid shells that allow for the diffusion of macromolecules. CA also has nucleocapsid-like chaperone activity, promoting primer tRNA(i)-Met annealing to the multipartite primer-binding site (PBS), dimerization of Ty1 RNA and initiation of reverse transcription. In Saccharomyces cerevisiae (strain ATCC 204508 / S288c) (Baker's yeast), this protein is Transposon Ty1-NL1 Gag polyprotein (TY1A-NL1).